The chain runs to 417 residues: Tyrosine--tRNA ligase (417 aa).

Tyr-40 lines the L-tyrosine pocket. Residues 45 to 54 (ATAASLHVGH) carry the 'HIGH' region motif. L-tyrosine is bound by residues Tyr-177 and Gln-181. A 'KMSKS' region motif is present at residues 237–241 (KMGKS). Lys-240 provides a ligand contact to ATP. An S4 RNA-binding domain is found at 351-414 (ISVVQLITRS…AGRKRHALIK (64 aa)).

Belongs to the class-I aminoacyl-tRNA synthetase family. TyrS type 1 subfamily. Homodimer.

The protein localises to the cytoplasm. It carries out the reaction tRNA(Tyr) + L-tyrosine + ATP = L-tyrosyl-tRNA(Tyr) + AMP + diphosphate + H(+). Catalyzes the attachment of tyrosine to tRNA(Tyr) in a two-step reaction: tyrosine is first activated by ATP to form Tyr-AMP and then transferred to the acceptor end of tRNA(Tyr). The chain is Tyrosine--tRNA ligase from Dinoroseobacter shibae (strain DSM 16493 / NCIMB 14021 / DFL 12).